Reading from the N-terminus, the 390-residue chain is Argininosuccinate synthase (390 aa).

Residue 6–14 (AYSGGLDTT) participates in ATP binding. An L-citrulline-binding site is contributed by tyrosine 84. Glycine 114 serves as a coordination point for ATP. L-aspartate contacts are provided by threonine 116, asparagine 120, and aspartate 121. Asparagine 120 is an L-citrulline binding site. L-citrulline-binding residues include arginine 124, serine 171, serine 180, glutamate 253, and tyrosine 265.

The protein belongs to the argininosuccinate synthase family. Type 1 subfamily. As to quaternary structure, homotetramer.

The protein localises to the cytoplasm. The catalysed reaction is L-citrulline + L-aspartate + ATP = 2-(N(omega)-L-arginino)succinate + AMP + diphosphate + H(+). It functions in the pathway amino-acid biosynthesis; L-arginine biosynthesis; L-arginine from L-ornithine and carbamoyl phosphate: step 2/3. This Sulfurisphaera tokodaii (strain DSM 16993 / JCM 10545 / NBRC 100140 / 7) (Sulfolobus tokodaii) protein is Argininosuccinate synthase.